The following is a 2771-amino-acid chain: Teneurin-4 (2771 aa).

Residues 1–22 (MDVKERKPYRSLTRRRDAERRY) are compositionally biased toward basic and acidic residues. Positions 1–45 (MDVKERKPYRSLTRRRDAERRYTSSSADSEEGKGPQKSYSSSETL) are disordered. Positions 1–341 (MDVKERKPYR…KPSKYCNWKC (341 aa)) constitute a Teneurin N-terminal domain. Residues 1-345 (MDVKERKPYR…YCNWKCAALS (345 aa)) lie on the Cytoplasmic side of the membrane. A Phosphoserine modification is found at serine 124. Residues 132–233 (WGRSTRSGRS…PPAGSAQEPT (102 aa)) are disordered. Low complexity predominate over residues 134 to 155 (RSTRSGRSSCLSSRANSNLTLT). Residues 156-166 (DTEHENTETDH) are compositionally biased toward basic and acidic residues. A Phosphothreonine modification is found at threonine 178. Polar residues predominate over residues 191-211 (QHHAASINSLNRGNFTPRSNP). A helical membrane pass occupies residues 346-366 (AILISATLVILLAYFVAMHLF). Topologically, residues 367–2771 (GLNWHLQPME…FMRQSEMGRR (2405 aa)) are extracellular. A disordered region spans residues 403–428 (SGGTGLETPDRKGKGAAEGKPSSLFP). A compositionally biased stretch (basic and acidic residues) spans 410–419 (TPDRKGKGAA). Residue asparagine 469 is glycosylated (N-linked (GlcNAc...) asparagine). The disordered stretch occupies residues 509–528 (ARSLEGPQRQSRGPVPPSSH). 8 EGF-like domains span residues 564-595 (SVDN…PDCG), 596-626 (RASC…AECD), 628-660 (PTNQ…ESCE), 661-692 (EVDC…TNCE), 694-727 (PRAT…HDCS), 728-759 (IEIC…ACDQ), 760-789 (RACH…EHCT), and 790-833 (IAHY…TGCD). Cystine bridges form between cysteine 568/cysteine 578, cysteine 572/cysteine 583, cysteine 585/cysteine 594, cysteine 603/cysteine 614, cysteine 616/cysteine 625, cysteine 632/cysteine 643, cysteine 637/cysteine 648, cysteine 650/cysteine 659, cysteine 664/cysteine 675, cysteine 669/cysteine 680, cysteine 682/cysteine 691, cysteine 702/cysteine 715, cysteine 717/cysteine 726, cysteine 731/cysteine 741, cysteine 735/cysteine 746, cysteine 748/cysteine 757, cysteine 762/cysteine 772, cysteine 766/cysteine 777, cysteine 779/cysteine 788, cysteine 802/cysteine 812, cysteine 806/cysteine 821, and cysteine 823/cysteine 832. N-linked (GlcNAc...) asparagine glycosylation is found at asparagine 942 and asparagine 1261. 5 NHL repeats span residues 1218 to 1261 (SCPS…PSGN), 1266 to 1310 (LEMR…VKST), 1336 to 1380 (TRCG…NGII), 1395 to 1446 (LSCD…VAGR), and 1525 to 1568 (CFSG…IRKN). A YD 1 repeat occupies 1578 to 1597 (YELSSPIDQELYLFDTSGKH). N-linked (GlcNAc...) asparagine glycosylation occurs at asparagine 1611. YD repeat units follow at residues 1614–1634 (YTGD…VNVR), 1677–1696 (YHGN…WTTF), and 1697–1719 (YEYD…SSFR). Residues asparagine 1707, asparagine 1743, asparagine 1801, and asparagine 1886 are each glycosylated (N-linked (GlcNAc...) asparagine). YD repeat units follow at residues 1889–1908 (YSPG…ERME), 1930–1948 (YLEK…YIFE), 1949–1969 (FDKN…QTLE), 1976–1993 (YYRN…VIQD), 1994–2015 (FTED…VIYK), 2016–2033 (YGKL…TKVS), 2036–2056 (YDET…FTCT), 2059–2079 (YRQI…EGMV), 2087–2106 (YDNS…TPLP), 2112–2129 (YDDV…GVIY), 2130–2156 (YDIN…MKEV), 2158–2171 (YEIF…MTVQ), 2172–2195 (YDNM…TRYS), 2198–2218 (YDAD…WRYS), 2219–2239 (YDLN…LTPL), 2241–2261 (YDLR…DEDG), 2273–2293 (YNSA…SVRY), and 2295–2315 (YDGL…LQFF). N-linked (GlcNAc...) asparagine glycosylation is present at asparagine 1987. Asparagine 2190 carries N-linked (GlcNAc...) asparagine glycosylation. The N-linked (GlcNAc...) asparagine glycan is linked to asparagine 2330. A YD 23 repeat occupies 2341–2382 (YDLQGHLFAMELSSGDEFYIACDNIGTPLAVFSGTGLMIKQI). N-linked (GlcNAc...) asparagine glycosylation is present at asparagine 2648.

It belongs to the tenascin family. Teneurin subfamily. In terms of assembly, homodimer; disulfide-linked. May also form heterodimer with either TENM1 or TENM2 or TENM3. In terms of tissue distribution, expressed in brain and spinal cord (at protein level). Expressed in neurons and oligodendrocytes of the spinal cord. Expressed weakly in kidney, lung and spleen. Expressed in the cortex, CA1, CA2 and CA3 of the hippocampus. Expressed in the white matter, Purkinje cells and molecular layer of the cerebellum.

It localises to the cell membrane. The protein resides in the cell projection. It is found in the nucleus. The protein localises to the cytoplasm. Involved in neural development, regulating the establishment of proper connectivity within the nervous system. Plays a role in the establishment of the anterior-posterior axis during gastrulation. Regulates the differentiation and cellular process formation of oligodendrocytes and myelination of small-diameter axons in the central nervous system (CNS). Promotes activation of focal adhesion kinase. May function as a cellular signal transducer. The chain is Teneurin-4 (Tenm4) from Mus musculus (Mouse).